We begin with the raw amino-acid sequence, 408 residues long: Putative UPF0496 protein 2 (408 aa).

2 helical membrane-spanning segments follow: residues 224–244 (RIAR…AIVA) and 252–272 (ALVG…GAAR). A disordered region spans residues 385-408 (MARGLPPPSPATVTTTSEERLTSS).

The protein belongs to the UPF0496 family.

It localises to the membrane. The chain is Putative UPF0496 protein 2 from Oryza sativa subsp. japonica (Rice).